The primary structure comprises 109 residues: Ig kappa chain V region K16-167 (109 aa).

The tract at residues Ala-1 to Cys-23 is framework-1. The tract at residues Gln-24–Ser-35 is complementarity-determining-1. The framework-2 stretch occupies residues Trp-36–Tyr-50. The tract at residues Lys-51–Ser-57 is complementarity-determining-2. The framework-3 stretch occupies residues Gly-58–Cys-89. The interval Gln-90–Val-99 is complementarity-determining-3. A framework-4 region spans residues Phe-100–Lys-109.

This Oryctolagus cuniculus (Rabbit) protein is Ig kappa chain V region K16-167.